A 398-amino-acid chain; its full sequence is ATP-dependent RNA helicase eIF4A (398 aa).

The Q motif signature appears at 25-53; sequence DSFDAMNLRAELLRGVYAYGFERPSAIQQ. Residues 56–226 enclose the Helicase ATP-binding domain; sequence IMPVIKGSDV…TKFMRDPVRI (171 aa). Residue 69-76 coordinates ATP; sequence AQSGTGKT. The DEAD box motif lies at 174-177; the sequence is DEAD. The Helicase C-terminal domain maps to 237-398; that stretch reads GIKQFYIAVE…EMPMNVADLI (162 aa).

This sequence belongs to the DEAD box helicase family. eIF4A subfamily. In terms of assembly, component of the eIF4F complex, which composition varies with external and internal environmental conditions. It is composed of at least eIF4A, eIF4E and eIF4G.

It localises to the cytoplasm. It carries out the reaction ATP + H2O = ADP + phosphate + H(+). ATP-dependent RNA helicase which is a subunit of the eIF4F complex involved in cap recognition and is required for mRNA binding to ribosome. In the current model of translation initiation, eIF4A unwinds RNA secondary structures in the 5'-UTR of mRNAs which is necessary to allow efficient binding of the small ribosomal subunit, and subsequent scanning for the initiator codon. The chain is ATP-dependent RNA helicase eIF4A (TIF1) from Coccidioides immitis (strain RS) (Valley fever fungus).